The sequence spans 117 residues: Small nuclear ribonucleoprotein Sm D1 (117 aa).

The Sm domain occupies 2–74 (KLVRFLMKLT…IRYYILPDSL (73 aa)). Residues 81 to 117 (IDDSTKPKQKKKEVVRGRGRGRGRGTRGRGRGASRGF) form a disordered region. Residues 87 to 117 (PKQKKKEVVRGRGRGRGRGTRGRGRGASRGF) are compositionally biased toward basic residues.

It belongs to the snRNP core protein family. As to quaternary structure, belongs to the 40S cdc5-associated complex (or cwf complex), a spliceosome sub-complex reminiscent of a late-stage spliceosome composed of the U2, U5 and U6 snRNAs and at least brr2, cdc5, cwf2/prp3, cwf3/syf1, cwf4/syf3, cwf5/ecm2, spp42/cwf6, cwf7/spf27, cwf8, cwf9, cwf10, cwf11, cwf12, prp45/cwf13, cwf14, cwf15, cwf16, cwf17, cwf18, cwf19, cwf20, cwf21, cwf22, cwf23, cwf24, cwf25, cwf26, cyp7/cwf27, cwf28, cwf29/ist3, lea1, msl1, prp5/cwf1, prp10, prp12/sap130, prp17, prp22, sap61, sap62, sap114, sap145, slu7, smb1, smd1, smd3, smf1, smg1 and syf2. Interacts with saf5; the interaction is direct.

It localises to the nucleus. It is found in the cytoplasm. Functionally, plays a role in pre-mRNA splicing as a core component of the spliceosomal U1, U2, U4 and U5 small nuclear ribonucleoproteins (snRNPs), the building blocks of the spliceosome. This is Small nuclear ribonucleoprotein Sm D1 (smd1) from Schizosaccharomyces pombe (strain 972 / ATCC 24843) (Fission yeast).